The primary structure comprises 805 residues: H(+)/Cl(-) exchange transporter 7 (805 aa).

Residues 1 to 49 (MANVSKKVSWSGRDRDDEEAAPLLRRTARPGGGTPLLNGAGPGAARQSP) form a disordered region. The Cytoplasmic segment spans residues 1 to 126 (MANVSKKVSW…TAFRTVEIKR (126 aa)). Serine 9 and serine 60 each carry phosphoserine. The next 2 membrane-spanning stretches (helical) occupy residues 127 to 159 (WVIC…YRVI) and 174 to 197 (FSLL…VAFI). The Selectivity filter part_1 motif lies at 203–207 (GSGIP). Serine 204 serves as a coordination point for chloride. An intramembrane region (helical) is located at residues 206–213 (IPQIKCFL). A run of 2 helical transmembrane segments spans residues 223–241 (RLKT…VVGG) and 247–264 (EGPM…ISQG). A Selectivity filter part_2 motif is present at residues 245-249 (GKEGP). 2 intramembrane regions (helical) span residues 288–300 (FVSA…VSAA) and 304–312 (PVGGVLFSL). Transmembrane regions (helical) follow at residues 322–341 (FLTW…LNFV), 375–405 (IPVF…FRIR), 410–432 (PCLQ…FVLI), 487–507 (PLTL…TYGL), and 512–535 (GVFI…LSYL). Residues 512–516 (GVFIP) carry the Selectivity filter part_3 motif. Phenylalanine 514 lines the chloride pocket. Positions 545–559 (GKYALMGAAAQLGGI) form an intramembrane region, helical. An intramembrane region (note=Loop between two helices) is located at residues 560–562 (VRM). Residues 563–574 (TLSLTVIMMEAT) constitute an intramembrane region (helical). Positions 575 to 578 (SNVT) form an intramembrane region, note=Loop between two helices. A helical membrane pass occupies residues 579 to 597 (YGFPIMLVLMTAKIVGDVF). At 598–805 (IEGLYDMHIQ…GLEELSLAQT (208 aa)) the chain is on the cytoplasmic side. Tyrosine 602 is a chloride binding site. CBS domains are found at residues 631–695 (MSTP…VFVE) and 741–799 (MNPS…GLEE). ATP is bound by residues 658–660 (HNG) and 783–786 (TRKD). Position 801 is a phosphoserine (serine 801).

It belongs to the chloride channel (TC 2.A.49) family. ClC-7/CLCN7 subfamily. Chloride channel 7 are heteromers of alpha (CLCN7) and beta (OSTM1) subunits. As to expression, brain and kidney.

It is found in the lysosome membrane. It catalyses the reaction 2 chloride(in) + H(+)(out) = 2 chloride(out) + H(+)(in). Its function is as follows. Slowly voltage-gated channel mediating the exchange of chloride ions against protons. Functions as antiporter and contributes to the acidification of the lysosome lumen and may be involved in maintaining lysosomal pH. The CLC channel family contains both chloride channels and proton-coupled anion transporters that exchange chloride or another anion for protons. The presence of conserved gating glutamate residues is typical for family members that function as antiporters. The chain is H(+)/Cl(-) exchange transporter 7 from Homo sapiens (Human).